The chain runs to 291 residues: tRNA dimethylallyltransferase (291 aa).

An ATP-binding site is contributed by 9–16 (GPTASGKT). 11–16 (TASGKT) contributes to the substrate binding site. Positions 34 to 37 (DSLQ) are interaction with substrate tRNA.

Belongs to the IPP transferase family. Monomer. It depends on Mg(2+) as a cofactor.

It catalyses the reaction adenosine(37) in tRNA + dimethylallyl diphosphate = N(6)-dimethylallyladenosine(37) in tRNA + diphosphate. Its function is as follows. Catalyzes the transfer of a dimethylallyl group onto the adenine at position 37 in tRNAs that read codons beginning with uridine, leading to the formation of N6-(dimethylallyl)adenosine (i(6)A). The protein is tRNA dimethylallyltransferase of Aster yellows witches'-broom phytoplasma (strain AYWB).